The following is a 281-amino-acid chain: Energy-coupling factor transporter ATP-binding protein EcfA1 (281 aa).

The region spanning 7-242 is the ABC transporter domain; sequence ISVEDIVFRY…NKELVRIGLD (236 aa). 42–49 is an ATP binding site; the sequence is GHNGSGKS. The active-site Proton acceptor is the Glu-168.

Belongs to the ABC transporter superfamily. Energy-coupling factor EcfA family. In terms of assembly, forms a stable energy-coupling factor (ECF) transporter complex composed of 2 membrane-embedded substrate-binding proteins (S component), 2 ATP-binding proteins (A component) and 2 transmembrane proteins (T component).

It is found in the cell membrane. Its function is as follows. ATP-binding (A) component of a common energy-coupling factor (ECF) ABC-transporter complex. Unlike classic ABC transporters this ECF transporter provides the energy necessary to transport a number of different substrates. The polypeptide is Energy-coupling factor transporter ATP-binding protein EcfA1 (Bacillus subtilis (strain 168)).